The following is a 360-amino-acid chain: Phospho-N-acetylmuramoyl-pentapeptide-transferase (360 aa).

10 helical membrane-spanning segments follow: residues 21–41 (YITF…LWIG), 73–93 (TMGG…WADL), 98–118 (VWFV…DDYW), 132–152 (WKYF…YAIG), 168–188 (VMPQ…VGTS), 199–219 (GLAI…AWAT), 236–256 (SGEL…FLWF), 263–283 (VFMG…IAVL), 288–308 (LLLV…ILQV), and 338–358 (VIVR…VTLK).

This sequence belongs to the glycosyltransferase 4 family. MraY subfamily. The cofactor is Mg(2+).

Its subcellular location is the cell inner membrane. The catalysed reaction is UDP-N-acetyl-alpha-D-muramoyl-L-alanyl-gamma-D-glutamyl-meso-2,6-diaminopimeloyl-D-alanyl-D-alanine + di-trans,octa-cis-undecaprenyl phosphate = di-trans,octa-cis-undecaprenyl diphospho-N-acetyl-alpha-D-muramoyl-L-alanyl-D-glutamyl-meso-2,6-diaminopimeloyl-D-alanyl-D-alanine + UMP. It functions in the pathway cell wall biogenesis; peptidoglycan biosynthesis. In terms of biological role, catalyzes the initial step of the lipid cycle reactions in the biosynthesis of the cell wall peptidoglycan: transfers peptidoglycan precursor phospho-MurNAc-pentapeptide from UDP-MurNAc-pentapeptide onto the lipid carrier undecaprenyl phosphate, yielding undecaprenyl-pyrophosphoryl-MurNAc-pentapeptide, known as lipid I. The protein is Phospho-N-acetylmuramoyl-pentapeptide-transferase of Glaesserella parasuis serovar 5 (strain SH0165) (Haemophilus parasuis).